A 145-amino-acid chain; its full sequence is 3-dehydroquinate dehydratase (145 aa).

The active-site Proton acceptor is Tyr22. Substrate-binding residues include Asn71, His77, and Asp84. His97 (proton donor) is an active-site residue. Residues Ile98–Ser99 and Arg108 contribute to the substrate site.

This sequence belongs to the type-II 3-dehydroquinase family. Homododecamer.

It carries out the reaction 3-dehydroquinate = 3-dehydroshikimate + H2O. The protein operates within metabolic intermediate biosynthesis; chorismate biosynthesis; chorismate from D-erythrose 4-phosphate and phosphoenolpyruvate: step 3/7. Functionally, catalyzes a trans-dehydration via an enolate intermediate. The polypeptide is 3-dehydroquinate dehydratase (Thermotoga neapolitana (strain ATCC 49049 / DSM 4359 / NBRC 107923 / NS-E)).